A 170-amino-acid chain; its full sequence is uncharacterized protein (170 aa).

The region spanning 25 to 151 (PALSPHLVVD…FGHHWSLGQP (127 aa)) is the VOC domain.

This is an uncharacterized protein from Mycobacterium tuberculosis (strain CDC 1551 / Oshkosh).